The primary structure comprises 523 residues: Succinate-semialdehyde dehydrogenase, mitochondrial (523 aa).

The N-terminal 35 residues, 1 to 35, are a transit peptide targeting the mitochondrion; sequence MATCFLLRNFCAARPALRPPGRLLREPAGAQRRSY. Lys-114 bears the N6-acetyllysine; alternate mark. The residue at position 114 (Lys-114) is an N6-succinyllysine; alternate. N6-succinyllysine is present on residues Lys-123 and Lys-172. NAD(+) is bound by residues Arg-201 and 216–219; that span reads KPAE. Substrate is bound at residue Arg-201. The residue at position 253 (Lys-253) is an N6-acetyllysine; alternate. N6-succinyllysine; alternate is present on Lys-253. 272–277 is a binding site for NAD(+); sequence GSTATG. The Proton acceptor role is filled by Glu-294. Arg-322 lines the substrate pocket. The Nucleophile role is filled by Cys-328. The cysteines at positions 328 and 330 are disulfide-linked. Lys-353 carries the N6-acetyllysine modification. Residue Lys-390 is modified to N6-succinyllysine. Lys-399 is subject to N6-acetyllysine. A substrate-binding site is contributed by Ser-486. Ser-487 carries the phosphoserine modification.

Belongs to the aldehyde dehydrogenase family. In terms of assembly, homotetramer. Brain, pancreas, heart, liver, skeletal muscle, kidney. Lower in spleen, lung, kidney and testis.

It is found in the mitochondrion. The enzyme catalyses succinate semialdehyde + NAD(+) + H2O = succinate + NADH + 2 H(+). It participates in amino-acid degradation; 4-aminobutanoate degradation. With respect to regulation, redox-regulated. Inhibited under oxydizing conditions. Catalyzes one step in the degradation of the inhibitory neurotransmitter gamma-aminobutyric acid (GABA). The protein is Succinate-semialdehyde dehydrogenase, mitochondrial (Aldh5a1) of Rattus norvegicus (Rat).